Reading from the N-terminus, the 445-residue chain is Exodeoxyribonuclease 7 large subunit (445 aa).

Belongs to the XseA family. As to quaternary structure, heterooligomer composed of large and small subunits.

It localises to the cytoplasm. It catalyses the reaction Exonucleolytic cleavage in either 5'- to 3'- or 3'- to 5'-direction to yield nucleoside 5'-phosphates.. Functionally, bidirectionally degrades single-stranded DNA into large acid-insoluble oligonucleotides, which are then degraded further into small acid-soluble oligonucleotides. This Staphylococcus aureus (strain bovine RF122 / ET3-1) protein is Exodeoxyribonuclease 7 large subunit.